Here is a 268-residue protein sequence, read N- to C-terminus: M1-specific T cell receptor alpha chain (268 aa).

An N-terminal signal peptide occupies residues 1-19 (MVLKFSVSILWIQLAWVST). Residues 20 to 107 (QLLEQSPQFL…QPGDTGLYLC (88 aa)) enclose the Ig-like V-type domain. The tract at residues 20 to 109 (QLLEQSPQFL…GDTGLYLCAG (90 aa)) is t cell receptor alpha variable 27. Asn36 and Asn42 each carry an N-linked (GlcNAc...) asparagine glycan. Cys41 and Cys107 are oxidised to a cystine. A CDR1 region spans residues 45-49 (SVFSS). A CDR2 region spans residues 67–69 (VVT). Residues 107–118 (CAGGGSQGNLIF) form a CDR3 region. The interval 110–128 (GGSQGNLIFGKGTKLSVKP) is t cell receptor alpha joining 42. The segment at 129 to 268 (IQNPDPAVYQ…LLMTLRLWSS (140 aa)) is t cell receptor alpha constant. The Ig-like C1-type domain maps to 147–235 (KSVCLFTDFD…LVEKSFETDT (89 aa)). Cys150 and Cys200 are joined by a disulfide. N-linked (GlcNAc...) asparagine glycosylation is found at Asn160, Asn194, Asn205, and Asn241. The connecting peptide stretch occupies residues 222 to 243 (CDVKLVEKSFETDTNLNFQNLS). A helical transmembrane segment spans residues 244–266 (VIGFRILLLKVAGFNLLMTLRLW). The Cytoplasmic segment spans residues 267–268 (SS).

As to quaternary structure, disulfide-linked heterodimer with TRBV19*01J2S7*01C*02 beta chain. The TR primarily interacts via its CDR3-beta domain with M/matrix protein 1-derived peptide (GILGFVFTL) displayed by HLA-A*02.01 in a 'peg-notch' recognition mode. The alpha-beta TR associates with the transmembrane signaling CD3 coreceptor proteins to form the TR-CD3 (TCR). The assembly of alpha-beta TR heterodimers with CD3 occurs in the endoplasmic reticulum where a single alpha-beta TR heterodimer associates with one CD3D-CD3E heterodimer, one CD3G-CD3E heterodimer and one CD247 homodimer forming a stable octameric structure. CD3D-CD3E and CD3G-CD3E heterodimers preferentially associate with TR alpha and TR beta chains (via TM domain), respectively. The association of the CD247 homodimer is the last step of TCR assembly in the endoplasmic reticulum and is required for transport to the cell surface. As to expression, expressed in M/matrix protein 1-specific effector and memory CD8-positive T cells readily detectable in the peripheral blood, secondary lymphoid organs and lung (primary site of infection) of IAV infected individuals.

The protein localises to the cell membrane. The alpha chain of TRAV27*01J42*01C*01/TRBV19*01J2S7*01C*02 alpha-beta T cell receptor (TR) clonotype that is specific for HLA-A*02:01-restricted M/matrix protein 1 immunodominant epitope GILGFVFTL of influenza A virus (IAV). Classified as a public TR clonotype, it is preferentially selected in effector memory CD8-positive T cells among multiple HLA-A*02:01 carriers and confers long-lived immunity against IAV infection. Can cross-recognize sporadically emerging IAV variants by molecular mimicry, inducing immunity toward different influenza strains. Antigen recognition initiates TR-CD3 clustering on the cell surface and intracellular activation of LCK that phosphorylates the ITAM motifs of CD3G, CD3D, CD3E and CD247 enabling the recruitment of ZAP70. In turn, ZAP70 phosphorylates LAT, which recruits numerous signaling molecules to form the LAT signalosome. The LAT signalosome propagates signal branching to three major signaling pathways, the calcium, the mitogen-activated protein kinase (MAPK) kinase and the nuclear factor NF-kappa-B (NF-kB) pathways, leading to the mobilization of transcription factors that are critical for gene expression and essential for T cell differentiation into effector/memory T cells. The sequence is that of M1-specific T cell receptor alpha chain from Homo sapiens (Human).